The primary structure comprises 68 residues: Large ribosomal subunit protein uL29 (68 aa).

The protein belongs to the universal ribosomal protein uL29 family.

This is Large ribosomal subunit protein uL29 from Rhodopseudomonas palustris (strain BisA53).